Consider the following 400-residue polypeptide: DNA primase large subunit PriL (400 aa).

4 residues coordinate [4Fe-4S] cluster: cysteine 247, cysteine 356, cysteine 367, and cysteine 373.

Belongs to the eukaryotic-type primase large subunit family. Heterodimer of a small subunit (PriS) and a large subunit (PriL). [4Fe-4S] cluster is required as a cofactor.

Regulatory subunit of DNA primase, an RNA polymerase that catalyzes the synthesis of short RNA molecules used as primers for DNA polymerase during DNA replication. Stabilizes and modulates the activity of the small subunit, increasing the rate of DNA synthesis, and conferring RNA synthesis capability. The DNA polymerase activity may enable DNA primase to also catalyze primer extension after primer synthesis. May also play a role in DNA repair. In Thermococcus kodakarensis (strain ATCC BAA-918 / JCM 12380 / KOD1) (Pyrococcus kodakaraensis (strain KOD1)), this protein is DNA primase large subunit PriL.